Here is a 299-residue protein sequence, read N- to C-terminus: Regucalcin (299 aa).

E18 lines the a divalent metal cation pocket. Substrate is bound by residues R101, N103, and E121. Residue K144 is modified to N6-succinyllysine. A divalent metal cation is bound by residues N154 and D204. The Proton donor/acceptor role is filled by D204. K244 and K253 each carry N6-succinyllysine. S268 is subject to Phosphoserine.

This sequence belongs to the SMP-30/CGR1 family. As to quaternary structure, monomer. The cofactor is Zn(2+). It depends on Mn(2+) as a cofactor. Ca(2+) serves as cofactor. Mg(2+) is required as a cofactor. Requires Co(2+) as cofactor. In terms of processing, the N-terminus is blocked. As to expression, detected in liver (at protein level). Hepatocytes and renal proximal tubular epithelium.

It is found in the cytoplasm. The catalysed reaction is D-glucono-1,5-lactone + H2O = D-gluconate + H(+). It participates in cofactor biosynthesis; L-ascorbate biosynthesis via UDP-alpha-D-glucuronate pathway; L-ascorbate from UDP-alpha-D-glucuronate: step 3/4. Gluconolactonase with low activity towards other sugar lactones, including gulonolactone and galactonolactone. Catalyzes a key step in ascorbic acid (vitamin C) biosynthesis. Can also hydrolyze diisopropyl phosphorofluoridate and phenylacetate (in vitro). Calcium-binding protein. Modulates Ca(2+) signaling, and Ca(2+)-dependent cellular processes and enzyme activities. This Rattus norvegicus (Rat) protein is Regucalcin (Rgn).